The sequence spans 5875 residues: MDPDLLLAIALSESLMDNNNNNNNNNNNNNNNNNNNNNNNNNNNSNNNNNKNVEMGEAEKQPPEDKISTYFKELTGLLKKDTIVKNLKPLLALLKSKELLLDQIYFLSKILESISFNIVFNGKEKDKVENEFEIFCKDTIEFCLNILEKWGNGDIDLSTIPNINNNNNNDNNSNNKTDDNNQSNNSKKLTPLTLLSVIDMLCCIEFPSTEIDKTFDNIPSFLNVSELDEILDSNNQDNKENKKEDKESSKPIASSPIPITTTNIEKPTIATTTTTSTSNSNIFSQFLNEGLKVEGLNETMIPSFKPSTLPPPPPTPTSTITTQPLPSSTITQPESYSNCGNGEGGMETFAKVNSNYFNNKLFGSSRLLSICSKLLVPYHADLTSPSTVEKFETFKKNQTLIQDFMSNVQDIIFSEGFDSLDKQTAPWTIDFLGNLIGTLRSFQSFSISNNLSYYNNDSKFLSKHLFENIFEVLGSKLDYPGLQIKAEIFFSLCILSDVNKMKIDIVKLLERDQSTPLDKEYLVLNPQLIILAIDLVFKNIREITEIQNNNNNNNNVDFNELLKIDSTVDQSTITGVEKPTTKFLLSEPLDGTGVEGWFDFSNENKQLFSKDSLFKLFIKPQLLDTLFNILYLCYFKPTKSTTTTTTATTTTTTTTTNESIPMETTRSSTPIPIVNNNNNNNDSKSNSKKSPPIKINDSYFGEDDLFGGLFDQSSTSIRSSSNKVNEGTPKSSTTTTTTNATIISTPANSNIKESSNDDGDHDEDIMKCKIFNLLSFIYLLQDDPMYKEFTKNHLTLTHLRILFTLIAPSSNPSIMAPKSKNSTVFKLLTNICFLLCKNSIISDTLLDQFIGFVFTSVDSQLLTLPKEQLAWIAWIFVKKQSTMVVGATNSVMVVSLWDGFLKNSSRVIREVSLVSSPFKEVISLDYILLLLFSFHTLDEKHRLGIVSTLCQSFNEIVCKVKSDQSFLPNSLMLSRCLMVFNYILFNFETVNPILSKLFNSQLLSFKKSNYQVGEFYKLSIVNLNYSGTIEKLIKKSAFINNDGLIGLPEFYDLYFIPPPNNTLTSPSKSINSSSNNILSPITPTNTTTTTTTTTPSTTSIPTNNEDWFNHSNNLEKITSLLQKSTNNDNCYEQFYNNIVSLCSLTPTVKSTQDGSSLDSLYFDYIVASSLKFLSCLPLSLSFLKAIKDPQTFTTVSNTSPIFITYLKSIYPSQCNNPEIPWLAHTENILTHFKYNGGTPSDSSLRVNGIVQSSLAYLTKVFDVGTSLNINKKLAESSGNVDTSGGGDSYFDGWESLFNDDDDEEEDEEEEEEMDEDDSENDEDEDSEESEKEQNKDNLKSSSSTVPTTTTTAAAATTTATATTKESTIRSNISTLLPSLINFIIDTLGHYRGIYKKSLIEQLSNHSNALHVKLIQELYILSSKTEVLEVMKSLDFSTDDRNTVEKWDEEYKPDPLVPKDQKQLFGWSVQPYNPSFTEGKVYSVALQSIIRLLLTLSNQALVHWDNVTETNPDSTKPILSKVSELIFEQVYISTDRSFSFLKDHYDNYSSLISGAQSGYLINQIKLANFESISKILIDPTFSPSNNSSNKFLSENSYLLTVLIGYVDSLISMSKLNGSHIYCYYISGFNGSVARGTRDFEFVLPTGNLQLLISVLFNNPCEKFNLKVLSALVHFMSISTPSEFFTSFRSHCITTFSKIPINDLKLWFEQKLLGINNFEKNSTATNGTEKMDIEIILNNNNNNNNKVEEKSGKINSTVSIQEQIIRLIGLLIGNKDLSCYSKDYLQQQAAAALAAKESEELLQQQLLQESEGKKKKRSSGSSTPTKIPGKKTPITSGQDSNSSPALTASSSPPSLEFVDWDEKVTSFALTLFDVLLSSLNNAFTVWIDQPKLLKGYFELLQFIAMGQHQLLKLFNEISNLSSPLLTNPTIDQLESLNLLVEFIENILDLSKSLKKPSSDQQHHSGGCHHSNHHHHHHHSRKDEVMVDKSSITNVVDEDILKDDVEVMDEEDEDELQYLSEDEKVVNGNENTGEEDDEERKLSSKVCTYTFTKNDYIDQHWYFCYTCGLKFSEGCCSVCVKVCHKGHQVSYSRYSRFFCDCGAGAGKGNPCKALKPRLYSPPKQLQQQQQQQQPQQPPQDQQKNVAAEQQPQQQQEEQQVASTTSSATNTNDQPIIPDSLSSSSSNSSPSFNNNNNNNNNGTTGSGNTFSSINNYFFNLPTQQDKEQLFNEIFNDKSNIISKLSELYPKLIEMYKKVQTDLIKPQSDSNSNKLEVFEESSTQSISSREIISKTDIFTTKKVSKNGTFEAKLKLEGVEGNQLKTFLSSGPIQRKAIASTSKGLLAIAEGDSVSLFNSSKILDDDAQLDKHSFSKALSKSSVAYPIVSMVFNPLNERFLAVVGFKEVKILTINQKDEIVDQLVIDLSLDALGETIYIIKVEWIIGSQVELAIVTNEFIKIYDLSKDNLSPIHFFSLLEDSIKDMCLVQKNGKNHILALSNYGLLYFQAIEDSIDNESCIMIETLQVPINKISAGVSVHYNIDLDLVIASYTNGECYAFQVNDTMTNVTRSFPIMDPAKKLPMPAQYFINLSPMFPNVYACLAARGGYLLGFKMGTKDISIQNLKLTQRVEGMTILNRSSPKLLILFDDGSIGRYDFNLENTIQQPLPTTSTTTDSINESDKKGLDILLYLKSKYQDSINKNNSGSSINSSGNNVATVSSSTTSTSAVIKSPPPLSSLLLQPTTTTTTSPVFPIDFFESTECITPNVKYGGDPLQWFSQDVIKQKLASNDEYIVCQSLETLTLVIMNNNFNNAICGIRILVGNASTKHIPTEIRVFNRTIQLKEGQRRWYDIPFTTEETLRSIKKVSFTAGSTFTMGTSPIIDQVEVYAKNKDSLGFNDSDDSDDEFPTVDENVTSSGLSTSAGGSGGGVAGTNDSTADKHTPLEIVILHCFNSLKNYFSNHVANDDSQKFIELKEKTLSILPSMITDSQLSFVRSSIKKLLKILSTNSEHYQTLKHSIQLKYASQTVSSILSNSGGTIPNSADLEKLDYLVAALKKISSSNPNNLEKYLFKDHPNFLSDLLTIYRNTTSPSSSKGKSSSASASSSSSTTTATSTLPSNTQSGSNNGAVSSNALLYSDSFISNLVQLLWNCQRSKIFSTDLIFTLLKSLLSHSNEIIRTRSSLILVSFISKSGNNSTVANLLPPPSSSSNENVVDNDNTNKENEGDIQMVDEVLFSCDLCNINPITGKRWNCSNCGDFDLCNQCYQNPEKDHPKDHIFKEFIIDEPMKDGDEKESTNEPPQQQKQQDQQLQQDLQDDSEYDEELKIAISMSLNNNNNNNNNNESMDTSTLTTTTTTTNKTTPTTNEEPMVGFIKLIIEEIIVSYEKGFSFMIPYMQILYSTILHNTTFILNNNQLSNQLVTTLVNLISKHKSNLSKFLSTKSNNLEGDILIFSLLSLLLDSDEQKRQKIQSKQTTTTAAAAATTTTTATATVTTPSVVTTPHSLPSTLIYHLSKLFIDRDIIQLLRLWIEQLYTCISESHGLSVGEERDSPFGALLVPSIDENQTLPKNRFTPFFGKYLPQSMGSIHLLLSKAIFKLMITFYRCERRKKSITQTTPTLIKPSEWTNLICSFIHSKKTVSIVKYPKKLLFLIYQTKSSYYSIRDEFLLKKKFAGILDLEGKTKGFSDEIGYDHLAKLISYLTLMLEVASDRPKSWQFFCAHNDVLPKLYKILFNLAEEPSSLLLELLTYVFVDEIAEQPLSSTSQDTQQESSNNNNNNNSNDILMQDVDTKAKHISIFLQEQYFNVLIFNILLESNSSDLRSIASSFIYYLWRSSNNEQRIFINKSLWSKLNNVASYGKNASEFMDLLTYFLNETDSQSWKDQHNEFSNKLIESFKQQNQISLNHPNSQIYNSLGKILEFDGYYLESEPCLVCNNPEVQYQTSRLESLKQEVKFSEYSQLIKFNGVYNISKIMIQLHDVKKGKMIKTINLFYNNKPVADIGDLKGKFNQWKKLKQVHFTPSQTEKAVVFQIPISARNFMIEYFDFHDNLQAASSEKLQCPRCSRIVTDKHGICKNCHENAYQCKHCRNINYENLDAFLCNECGFCKHAKFDYSFVCKPTIAIEKIENQEDHKRAIQTIEKESENAHKKYQRLIGFKKVISGLINSFETQEPWSKDDLIKSSGGTISIANTSTNSTGSNNQSINSSSGNISTNSSSSSSSSFGISNQSSSGNGGGGVGSGGGGVINQSGTSNNSSFLTLRINKKIGYLSRLYERECRNIYEGLSKSVQILQTNRMEISKYMNFISGGGQPSSNDKQQQQQQQQQQSSRQCPVSIHLREENKCYGCSNSYIEQVLCLLNSFCRNSELTPIKNLLIEKGLPKEIFFNNIHHGKSIAKGWAKSSLSYLTKSNIDCTSMVNQWIKDKIYYTLCYYSSLDVPNMVSSEISLLKECSSLSDNIWPQRLSFIMELFFKALSSGSQSPVVSEYIILPCLKIIIYLCTLDRKGAFITKDAKDLEISQKLLATRFEKLKSSKKQAIALAATATATATAANASLTSTIEKKIEALSSLLSPNTVNNIALSVASSLLSPQQMQLQIQQQIALQQQQIQQQIQQQQQQLNESVSGLKILSPSSSSSSPSGVGATGSENGGGGSGSSSGSSVSGSGSISSSQDPNILSIFDNDTSNAGANESWDGDDNPIANAWSSKYENYLSNFNVNSSIGEISKSLKPLSQDELKSKYFKRWYAQVKKRKQQQQQQSSGIGYATQSSFEVLFEEKWLEKLLFNSTSSIRLEIITLMGILSKNSNSRSLKFLDLLTKILPNATEAGEYSAEFFGLFNSFISTSQDRKIYLAVKGFIPFICDAIIKEIEHIKSKEGSFSTDVSQGFVLKTLVAILKSFLDVPTLKAKMKKDNMLEKVLDAFLSLRGVIVQKNKLTEDSVRYLQELMKSLNNESVQDNKKFMAANIKALAKYQSDGRTPIFIFEQLCNIVCPTKPDPIYQLILFKAASQEEYIRGSMNRNPYTSNTFGGPLMRDVKNKICKALDLGSFLDDDNGMELLVDNKIIKLDLPIKKVYELVWKKSPQALRTADINIPMNVVYRLQGLDGEATEEIIETLNDNNSEEKDPEVEYEITSVMAECGGLESMISMIERINDFSIEKELAQLVIKLLYHCCKIKINRQKLLTLNTVGRLLEKLKQAFHQPELSEHLLVIIESVVSEANRDYLRGSNSSTSLSHHKDINEAQEQMNMFLDKLNGAQVMSNPKIIQAITRIIPFLTYGHTEIMDYLVDFFTPYLNFQEFDDSKSKDTNHVYHLDFFTKLMENTRPDSNGRSIRSIIIKRGITKSLVDYLLNYFPENGDKTSQEWLSSLEKPALPFVLVLLKGLAMGHEPTQNMTLESNLIKRIHILEETAGTSAKIGSLAENLLESIAEGNEKTSKIVSDTRKESKMEKLSHAQKHREDVLKQLGLAQQGKHIMANVVPGSIEDLDDDEGFTCMVCREGYSFKPTDVLGIYTFSKRIPLTSVGETTCPPSSTTNVAASLSLSPSSSGGGGGGALYYGFTTVTHFNFIHFNCHRDATKADRSMKVPKEEWEGAALRNQQTKCNGLFPVLPPKMNSDAFTPYSDKFWVNLNNISRVEGPKFRILSHDLKFLLIRLAKDESFSTDSKGGGKESNIRIAPMFVQLGMFLLDQKLVGGNSANQLRRPQFEKTLAQFTTLPLETAITSMYQMLSDNVPYFLVVSIFLHSPKEFENQKFNYLTKLLAYAFVDYLTTNTKNGLSSPDEPSKDKLFDITRPWLIFFSLLSKFHSIIKPSSCTEENWIQETKNHLSTNCTKIQVDVKELLNCFENELKEFQDEMEFFDDEGLLKNVLLNNKDSNEYLLKLYKSVKSNKK.

Disordered stretches follow at residues 17–64, 164–185, 232–276, 302–342, 642–693, 716–740, 1081–1101, 1291–1367, 1806–1851, 1952–1982, 2008–2036, 2109–2203, 2893–2930, 3083–3119, and 3195–3214; these read DNNN…QPPE, NNNN…QSNN, DSNN…TTTS, PSFK…CGNG, TTTT…SPPI, SIRS…TTNA, ITPT…TSIP, DGWE…KEST, QESE…SSPP, KKPS…KDEV, EDED…DDEE, KALK…TGSG, DSDD…TNDS, TSPS…SGSN, and LLPP…DNTN. Over residues 18-52 the composition is skewed to low complexity; sequence NNNNNNNNNNNNNNNNNNNNNNNNNNNSNNNNNKN. Residues 237-249 show a composition bias toward basic and acidic residues; sequence DNKENKKEDKESS. Low complexity-rich tracts occupy residues 250-276, 317-333, and 642-656; these read KPIA…TTTS, TSTI…ITQP, and TTTT…TTTT. Residues 657 to 669 show a composition bias toward polar residues; the sequence is NESIPMETTRSST. The span at 670-693 shows a compositional bias: low complexity; the sequence is PIPIVNNNNNNNDSKSNSKKSPPI. The segment covering 716 to 725 has biased composition (polar residues); that stretch reads SIRSSSNKVN. Residues 728-740 are compositionally biased toward low complexity; it reads TPKSSTTTTTTNA. Residues 1297-1330 show a composition bias toward acidic residues; sequence FNDDDDEEEDEEEEEEMDEDDSENDEDEDSEESE. The stretch at 1300–1328 forms a coiled coil; the sequence is DDDEEEDEEEEEEMDEDDSENDEDEDSEE. Low complexity-rich tracts occupy residues 1347-1363 and 1838-1851; these read TTTT…TATT and SNSS…SSPP. Residues 1963–1977 are compositionally biased toward basic residues; sequence GGCHHSNHHHHHHHS. A UBR-type zinc finger spans residues 2042–2113; the sequence is KVCTYTFTKN…KGNPCKALKP (72 aa). Low complexity-rich tracts occupy residues 2118 to 2168 and 2178 to 2203; these read PPKQ…TNTN and SSSS…TGSG. Residues 2893 to 2903 are compositionally biased toward acidic residues; the sequence is DSDDSDDEFPT. Over residues 2908–2917 the composition is skewed to low complexity; the sequence is VTSSGLSTSA. A compositionally biased stretch (low complexity) spans 3201 to 3211; that stretch reads SSSNENVVDND. The segment at 3226–3280 adopts a ZZ-type zinc-finger fold; the sequence is EVLFSCDLCNINPITGKRWNCSNCGDFDLCNQCYQNPEKDHPKDHIFKEFIIDEP. The Zn(2+) site is built by C3231, C3234, C3246, C3249, C3255, C3258, H3266, and H3270. Disordered stretches follow at residues 3282–3312, 3326–3359, and 3754–3776; these read KDGD…QDDS, LNNN…PTTN, and SSTS…SNDI. Composition is skewed to low complexity over residues 3295–3307 and 3327–3358; these read QQQK…LQQD and NNNN…TPTT. In terms of domain architecture, UIM spans 3313–3332; the sequence is EYDEELKIAISMSLNNNNNN. The segment covering 3754–3763 has biased composition (polar residues); that stretch reads SSTSQDTQQE. Over residues 3764–3774 the composition is skewed to low complexity; sequence SSNNNNNNNSN. Positions 4118 to 4146 form a coiled coil; it reads IENQEDHKRAIQTIEKESENAHKKYQRLI. Residues 4182-4222 show a composition bias toward low complexity; that stretch reads NTSTNSTGSNNQSINSSSGNISTNSSSSSSSSFGISNQSSS. Disordered stretches follow at residues 4182–4237, 4295–4323, and 4616–4671; these read NTST…GGVI, FISG…RQCP, and KILS…FDND. A compositionally biased stretch (gly residues) spans 4223-4236; sequence GNGGGGVGSGGGGV. Residues 4308–4317 show a composition bias toward low complexity; the sequence is QQQQQQQQQQ. Residues 4585–4618 adopt a coiled-coil conformation; the sequence is QIQQQIALQQQQIQQQIQQQQQQLNESVSGLKIL. Low complexity-rich tracts occupy residues 4619-4635 and 4645-4659; these read SPSS…ATGS and SSGS…ISSS. A UBR4 E3 catalytic module region spans residues 5357–5870; it reads PALPFVLVLL…EYLLKLYKSV (514 aa). The HemiRING-type zinc-finger motif lies at 5476–5620; that stretch reads GFTCMVCREG…WVNLNNISRV (145 aa). Zn(2+)-binding residues include C5479, C5482, H5554, and C5557. The region spanning 5623–5870 is the UZI domain; that stretch reads PKFRILSHDL…EYLLKLYKSV (248 aa). Residues 5819-5846 are a coiled coil; that stretch reads QVDVKELLNCFENELKEFQDEMEFFDDE.

This sequence belongs to the UBR4 family.

The protein operates within protein modification; protein ubiquitination. Functionally, probable E3 ubiquitin-protein ligase. The chain is Probable E3 ubiquitin-protein ligase DDB_G0283893 from Dictyostelium discoideum (Social amoeba).